Here is a 197-residue protein sequence, read N- to C-terminus: RNA chaperone ProQ (197 aa).

The interval 115 to 138 (RAAAKKAQQKKHPRKPANKNLKKE) is disordered. The span at 117–131 (AAKKAQQKKHPRKPA) shows a compositional bias: basic residues.

Belongs to the ProQ family.

The protein resides in the cytoplasm. Functionally, RNA chaperone with significant RNA binding, RNA strand exchange and RNA duplexing activities. This Haemophilus influenzae (strain ATCC 51907 / DSM 11121 / KW20 / Rd) protein is RNA chaperone ProQ.